Consider the following 606-residue polypeptide: Aspartate--tRNA(Asp/Asn) ligase (606 aa).

Residue glutamate 177 participates in L-aspartate binding. Positions 201–204 (QLFK) are aspartate. L-aspartate is bound at residue arginine 223. ATP is bound by residues 223 to 225 (RDE) and glutamine 232. L-aspartate is bound at residue histidine 461. Glutamate 499 lines the ATP pocket. L-aspartate is bound at residue arginine 506. ATP is bound at residue 551 to 554 (GMDR).

The protein belongs to the class-II aminoacyl-tRNA synthetase family. Type 1 subfamily. In terms of assembly, homodimer.

The protein localises to the cytoplasm. The catalysed reaction is tRNA(Asx) + L-aspartate + ATP = L-aspartyl-tRNA(Asx) + AMP + diphosphate. Functionally, aspartyl-tRNA synthetase with relaxed tRNA specificity since it is able to aspartylate not only its cognate tRNA(Asp) but also tRNA(Asn). Reaction proceeds in two steps: L-aspartate is first activated by ATP to form Asp-AMP and then transferred to the acceptor end of tRNA(Asp/Asn). This is Aspartate--tRNA(Asp/Asn) ligase from Prochlorococcus marinus (strain MIT 9313).